The chain runs to 70 residues: uncharacterized protein (70 aa).

It is found in the plastid. The protein resides in the chloroplast. This is an uncharacterized protein from Mesostigma viride (Green alga).